A 310-amino-acid polypeptide reads, in one-letter code: MKITVIGAGHVGATAAHRIAEQQLANTVVLFDILEGIPQGKALDMYESGPVGLFDTKVYGTTDYNDTADSDIILITAGMARKPGMSREDLLMKNATIVKEVTDQVVRFSKNPIIIMVSNPLDIMTHVGYIRSKLPKERVLGMAGVLDSARFRSFIAEELNVSMRDINAFVLGGHGDSMVPVVKYTSVAGIPLTELMAQDTIEQLVDRTRKGGAEIVNYLKNGSAYYAPASSAVEMIDAIVNDRKRILPCSALLEGQYGINNVYIGAPVKLGKNGIEQILEIDLDAPELDALRKSAAIVEENCNNLASLLA.

NAD(+)-binding positions include 7–12 (GAGHVG) and Asp-32. Positions 81 and 87 each coordinate substrate. NAD(+) contacts are provided by residues Asn-94 and 117–119 (VSN). Substrate is bound by residues Asn-119 and Arg-150. His-174 functions as the Proton acceptor in the catalytic mechanism.

The protein belongs to the LDH/MDH superfamily. MDH type 3 family.

The enzyme catalyses (S)-malate + NAD(+) = oxaloacetate + NADH + H(+). Catalyzes the reversible oxidation of malate to oxaloacetate. The sequence is that of Malate dehydrogenase from Chlorobium phaeobacteroides (strain BS1).